A 190-amino-acid chain; its full sequence is Probable thymidylate kinase (190 aa).

Residue 9–16 (GIDGAGKT) coordinates ATP.

The protein belongs to the thymidylate kinase family.

It carries out the reaction dTMP + ATP = dTDP + ADP. This is Probable thymidylate kinase (tmk1) from Sulfurisphaera tokodaii (strain DSM 16993 / JCM 10545 / NBRC 100140 / 7) (Sulfolobus tokodaii).